A 32-amino-acid polypeptide reads, in one-letter code: Ranatuerin-2BYa (32 aa).

The cysteines at positions 27 and 32 are disulfide-linked.

Expressed by the skin glands.

The protein resides in the secreted. Its function is as follows. Antibacterial activity against Gram-positive bacterium S.aureus and Gram-negative bacterium E.coli. Weak hemolytic activity. This is Ranatuerin-2BYa from Rana boylii (Foothill yellow-legged frog).